Consider the following 102-residue polypeptide: Large ribosomal subunit protein uL23 (102 aa).

The protein belongs to the universal ribosomal protein uL23 family. In terms of assembly, part of the 50S ribosomal subunit. Contacts protein L29, and trigger factor when it is bound to the ribosome.

In terms of biological role, one of the early assembly proteins it binds 23S rRNA. One of the proteins that surrounds the polypeptide exit tunnel on the outside of the ribosome. Forms the main docking site for trigger factor binding to the ribosome. This chain is Large ribosomal subunit protein uL23, found in Chromobacterium violaceum (strain ATCC 12472 / DSM 30191 / JCM 1249 / CCUG 213 / NBRC 12614 / NCIMB 9131 / NCTC 9757 / MK).